The chain runs to 232 residues: GLQEFQFEYPFVIQGIAGCELHSGKAIQSFLRAGFEGLDFVSIENHSCVPEPEGGSEAQWFCVFITQYQGILAIIDRLLSKTCPRYLLGVLDAGKAELHRQVKPEAWLSSGPTPGPGRLLLVCHVSGFYPKPVRVMWMRGEQEQPGTQQGNIILNADWTWYLRVTLDVAAGEAAGLSCRVKHSSLGDQDIILYWGHPMYIGLIFVAIIVPSLILLICLALWFWRRWSYQTVL.

At 1–201 (GLQEFQFEYP…LYWGHPMYIG (201 aa)) the chain is on the extracellular side. 3 cysteine pairs are disulfide-bonded: Cys-19–Cys-83, Cys-48–Cys-62, and Cys-123–Cys-178. Residue Asn-45 is glycosylated (N-linked (GlcNAc...) asparagine). Residues 84–194 (PRYLLGVLDA…LGDQDIILYW (111 aa)) enclose the Ig-like domain. A helical transmembrane segment spans residues 202-222 (LIFVAIIVPSLILLICLALWF). Residues 223–232 (WRRWSYQTVL) lie on the Cytoplasmic side of the membrane.

Heterodimer with B2M (beta-2-microglobulin). Interacts with saposin C.

It localises to the cell membrane. It is found in the endosome membrane. The protein localises to the lysosome membrane. In terms of biological role, antigen-presenting protein that binds self and non-self lipid and glycolipid antigens and presents them to T-cell receptors on natural killer T-cells. In Ovis aries (Sheep), this protein is T-cell surface glycoprotein CD1b-3.